The chain runs to 466 residues: SVGFKAGVKDYKLTYYTPDYETKDTDILAAFRVTPQPGVPPEEAGAAVAAESSTGTWTTVWTDGLTSLDRYKGRCYGIEPVPGEESQFIAYVAYPLDLFEEGSVTNMFTSIVGNVFGFKALRALRLEDLRIPTAYVKTFQGPPHGIQVERDKLNKYGRPLLGCTIKPKLGLSAKNYGRAVYECLRGGLDFTKDDENVNSQPFMRWRDRFLFCAEALYKAQAETGEIKGHYLNATAGTCEEMMKRAIFARELGVPIVMHDYLTGGFTANTSLAHYCRDNGLLLHIHRAMHAVIDRQKNHGIHFRVLAKALRMSGGDHIHSGTVVGKLEGERDITLGFVDLLRDDFIEKDRSRGIYFTQDWVSLPGVLPVASGGIHVWHMPALTEIFGDDSVLQFGGGTLGHPWGNAPGAVANRVALEACVQARNEGRDLAVEGNEIIREATKWSPELAAACEVWKEIKFEFQAVDTI.

Lys-5 bears the N6,N6,N6-trimethyllysine mark. Asn-114 and Thr-164 together coordinate substrate. Lys-166 acts as the Proton acceptor in catalysis. Residue Lys-168 coordinates substrate. Mg(2+)-binding residues include Lys-192, Asp-194, and Glu-195. Residue Lys-192 is modified to N6-carboxylysine. His-285 acts as the Proton acceptor in catalysis. Residues Arg-286, His-318, and Ser-370 each contribute to the substrate site.

Belongs to the RuBisCO large chain family. Type I subfamily. Heterohexadecamer of 8 large chains and 8 small chains; disulfide-linked. The disulfide link is formed within the large subunit homodimers. It depends on Mg(2+) as a cofactor. Post-translationally, the disulfide bond which can form in the large chain dimeric partners within the hexadecamer appears to be associated with oxidative stress and protein turnover.

It localises to the plastid. Its subcellular location is the chloroplast. The enzyme catalyses 2 (2R)-3-phosphoglycerate + 2 H(+) = D-ribulose 1,5-bisphosphate + CO2 + H2O. The catalysed reaction is D-ribulose 1,5-bisphosphate + O2 = 2-phosphoglycolate + (2R)-3-phosphoglycerate + 2 H(+). RuBisCO catalyzes two reactions: the carboxylation of D-ribulose 1,5-bisphosphate, the primary event in carbon dioxide fixation, as well as the oxidative fragmentation of the pentose substrate in the photorespiration process. Both reactions occur simultaneously and in competition at the same active site. In Eremothamnus marlothianus, this protein is Ribulose bisphosphate carboxylase large chain.